Consider the following 462-residue polypeptide: Glutamate--tRNA ligase 1 (462 aa).

Positions 8–18 (PSPTGYLHIGG) match the 'HIGH' region motif. The short motif at 236 to 240 (KLSKR) is the 'KMSKS' region element. Lysine 239 serves as a coordination point for ATP.

This sequence belongs to the class-I aminoacyl-tRNA synthetase family. Glutamate--tRNA ligase type 1 subfamily. Monomer.

It is found in the cytoplasm. It catalyses the reaction tRNA(Glu) + L-glutamate + ATP = L-glutamyl-tRNA(Glu) + AMP + diphosphate. In terms of biological role, catalyzes the attachment of glutamate to tRNA(Glu) in a two-step reaction: glutamate is first activated by ATP to form Glu-AMP and then transferred to the acceptor end of tRNA(Glu). The sequence is that of Glutamate--tRNA ligase 1 from Sulfurovum sp. (strain NBC37-1).